The following is a 465-amino-acid chain: MSQGKIVQIIGAVVDVEFPRDMIPRVYDALKLDENGLTLEVQQLLGDGVVRTIAMGSSDGLKRGMTVSNTGAPITVPVGKGTLGRIVDVLGTPVDEAGPIDTDKSRAIHQAAPKFDELSSTTELLETGIKVIDLLCPFAKGGKVGLFGGAGVGKTVNMMELINNIAKAHSGLSVFAGVGERTREGNDFYHEMKDSNVLDKVAMVYGQMNEPPGNRLRVALTGLTMAEYFRDEKDENGKGRDVLFFVDNIYRYTLAGTEVSALLGRMPSAVGYQPTLAEEMGRLQERITSTQTGSITSIQAVYVPADDLTDPSPATTFAHLDATVVLSRDIASLGIYPAVDPLDSTSRQLDPMVLGQEHYDVARGVQSTLQKYKELRDIIAILGMDELSDEDKLTVMRARKIQRFLSQPFHVAEVFTGSPGKYVALRDTIAGFKAILNGEYDHLPEQAFYMVGSIEEAVEKAKTLN.

Gly-148–Thr-155 contributes to the ATP binding site.

This sequence belongs to the ATPase alpha/beta chains family. As to quaternary structure, F-type ATPases have 2 components, CF(1) - the catalytic core - and CF(0) - the membrane proton channel. CF(1) has five subunits: alpha(3), beta(3), gamma(1), delta(1), epsilon(1). CF(0) has three main subunits: a(1), b(2) and c(9-12). The alpha and beta chains form an alternating ring which encloses part of the gamma chain. CF(1) is attached to CF(0) by a central stalk formed by the gamma and epsilon chains, while a peripheral stalk is formed by the delta and b chains.

The protein localises to the cell inner membrane. The enzyme catalyses ATP + H2O + 4 H(+)(in) = ADP + phosphate + 5 H(+)(out). Produces ATP from ADP in the presence of a proton gradient across the membrane. The catalytic sites are hosted primarily by the beta subunits. This is ATP synthase subunit beta from Neisseria meningitidis serogroup C (strain 053442).